A 345-amino-acid polypeptide reads, in one-letter code: D-amino-acid oxidase (345 aa).

Positions 10, 13, 49, 53, and 55 each coordinate FAD. (R)-lactate-binding residues include tyrosine 230 and arginine 290. The anthranilate site is built by tyrosine 230 and arginine 290. Positions 290, 317, 320, 321, and 322 each coordinate FAD. The Microbody targeting signal motif lies at alanine 343 to leucine 345.

It belongs to the DAMOX/DASOX family. It depends on FAD as a cofactor.

It is found in the peroxisome matrix. The enzyme catalyses a D-alpha-amino acid + O2 + H2O = a 2-oxocarboxylate + H2O2 + NH4(+). It catalyses the reaction D-methionine + O2 + H2O = 4-methylsulfanyl-2-oxobutanoate + H2O2 + NH4(+). Functionally, catalyzes the oxidative deamination of D-amino acids with broad substrate specificity. Enables the organism to utilize D-amino acids as a source of nutrients. Enables the organism to utilize D-alanine as a nitrogen source, although it is not strictly required for this process. Also enables utilization of D-alanine as a carbon source. This chain is D-amino-acid oxidase, found in Candida boidinii (Yeast).